The chain runs to 494 residues: Putative glucuronosyltransferase PGSIP7 (494 aa).

Residues 4 to 24 (QRTLMFSCWVLSLLIIKTTAY) form a helical membrane-spanning segment. Mn(2+) is bound by residues aspartate 161 and aspartate 163. 5 helical membrane passes run 316-336 (YSAE…IILV), 362-382 (AFKF…FFII), 389-409 (LIGW…PINA), 410-430 (FLLP…TLLV), and 444-464 (LSVF…FVKI).

This sequence belongs to the glycosyltransferase 8 family. Glycogenin subfamily. The cofactor is Mn(2+).

It is found in the membrane. This chain is Putative glucuronosyltransferase PGSIP7 (PGSIP7), found in Arabidopsis thaliana (Mouse-ear cress).